We begin with the raw amino-acid sequence, 216 residues long: Ribosomal RNA small subunit methyltransferase G (216 aa).

Residues G83, M88, 134 to 135 (VE), and R149 each bind S-adenosyl-L-methionine.

The protein belongs to the methyltransferase superfamily. RNA methyltransferase RsmG family.

It is found in the cytoplasm. The catalysed reaction is guanosine(527) in 16S rRNA + S-adenosyl-L-methionine = N(7)-methylguanosine(527) in 16S rRNA + S-adenosyl-L-homocysteine. Functionally, specifically methylates the N7 position of guanine in position 527 of 16S rRNA. In Pseudomonas putida (strain ATCC 700007 / DSM 6899 / JCM 31910 / BCRC 17059 / LMG 24140 / F1), this protein is Ribosomal RNA small subunit methyltransferase G.